Reading from the N-terminus, the 207-residue chain is Guanylate kinase (207 aa).

In terms of domain architecture, Guanylate kinase-like spans 6–185 (GLLIVLSGPS…AKNRIQSIVE (180 aa)). 13–20 (GPSGVGKG) is an ATP binding site.

The protein belongs to the guanylate kinase family.

It localises to the cytoplasm. It carries out the reaction GMP + ATP = GDP + ADP. In terms of biological role, essential for recycling GMP and indirectly, cGMP. This Staphylococcus epidermidis (strain ATCC 35984 / DSM 28319 / BCRC 17069 / CCUG 31568 / BM 3577 / RP62A) protein is Guanylate kinase.